The chain runs to 424 residues: L-glutamine:scyllo-inosose aminotransferase (424 aa).

The tract at residues 1-21 (MDSSLAISGGPRLSNREWPRW) is disordered. Lys202 carries the N6-(pyridoxal phosphate)lysine modification.

It belongs to the DegT/DnrJ/EryC1 family. L-glutamine:2-deoxy-scyllo-inosose/scyllo-inosose aminotransferase subfamily. Homodimer. It depends on pyridoxal 5'-phosphate as a cofactor.

It catalyses the reaction scyllo-inosose + L-glutamine = 1-amino-1-deoxy-scyllo-inositol + 2-oxoglutaramate. It participates in antibiotic biosynthesis; streptomycin biosynthesis. Catalyzes the PLP-dependent transamination of scyllo-inosose to form scyllo-inosamine. The chain is L-glutamine:scyllo-inosose aminotransferase (stsC) from Streptomyces griseus.